An 894-amino-acid chain; its full sequence is B-cell lymphoma/leukemia 11B (894 aa).

Phosphoserine occurs at positions 97 and 110. Phosphothreonine is present on Thr-120. A Phosphoserine modification is found at Ser-129. Lys-137 is covalently cross-linked (Glycyl lysine isopeptide (Lys-Gly) (interchain with G-Cter in SUMO2)). The C2H2-type 1 zinc-finger motif lies at 221-251 (YICTTCKQPFNSAWFLLQHAQNTHGFRIYLE). Ser-256 bears the Phosphoserine mark. Phosphothreonine is present on Thr-260. Residue Ser-277 is modified to Phosphoserine. Residue Arg-293 is modified to Omega-N-methylarginine. Arg-322 carries the post-translational modification Asymmetric dimethylarginine. Position 358 is a phosphoserine (Ser-358). Disordered stretches follow at residues 370–428 (LAGN…KSKS) and 471–583 (KRHM…GGGA). Thr-376 is subject to Phosphothreonine. Phosphoserine is present on residues Ser-381, Ser-398, and Ser-401. The segment covering 396–423 (QPSPKSPFLSTPPLPPMPPGGTPPPQPP) has biased composition (pro residues). Phosphothreonine occurs at positions 406 and 417. 2 C2H2-type zinc fingers span residues 427–454 (KSCE…GEKP) and 455–482 (YKCQ…HKAG). Residues 471–480 (KRHMKTHMHK) show a composition bias toward basic residues. Ser-483, Ser-488, Ser-496, and Ser-497 each carry phosphoserine. A compositionally biased stretch (basic and acidic residues) spans 511–529 (KAADGDFRHHESDPSLGHE). Positions 530–546 (PEEEDEEEEEEEEELLL) are enriched in acidic residues. Positions 568 to 583 (NGGGGVPGVPGAGGGA) are enriched in gly residues. Residues Lys-591 and Lys-617 each participate in a glycyl lysine isopeptide (Lys-Gly) (interchain with G-Cter in SUMO2) cross-link. The disordered stretch occupies residues 653-680 (GRGGGFAPGTEPFPGLFPRKPAPLPSPG). Residue Ser-678 is modified to Phosphoserine. Residues Lys-686 and Lys-723 each participate in a glycyl lysine isopeptide (Lys-Gly) (interchain with G-Cter in SUMO2) cross-link. Polar residues predominate over residues 737-752 (FATSSEHSSENGSLRF). The segment at 737–794 (FATSSEHSSENGSLRFSTPPGDLLDGGLSGRSGTASGGSTPHLGGPGPGRPSSKEGRR) is disordered. Positions 753–775 (STPPGDLLDGGLSGRSGTASGGS) are enriched in low complexity. Thr-754 carries the post-translational modification Phosphothreonine. Phosphoserine occurs at positions 765 and 772. 3 consecutive C2H2-type zinc fingers follow at residues 796–823 (DTCE…GERP), 824–853 (YKCE…GKEV), and 854–884 (YRCD…LLTN). At Lys-851 the chain carries N6-acetyllysine. Residue Lys-887 forms a Glycyl lysine isopeptide (Lys-Gly) (interchain with G-Cter in SUMO2) linkage.

Interacts with TFCOUP1, SIRT1, ARP1 and EAR2. Interacts with EP300; the interaction is detected in activated T-lymphocytes, but not under resting conditions. Sumoylated with SUMO1. In terms of tissue distribution, highly expressed in brain and in malignant T-cell lines derived from patients with adult T-cell leukemia/lymphoma.

Its subcellular location is the nucleus. Key regulator of both differentiation and survival of T-lymphocytes during thymocyte development in mammals. Essential in controlling the responsiveness of hematopoietic stem cells to chemotactic signals by modulating the expression of the receptors CCR7 and CCR9, which direct the movement of progenitor cells from the bone marrow to the thymus. Is a regulator of IL2 promoter and enhances IL2 expression in activated CD4(+) T-lymphocytes. Tumor-suppressor that represses transcription through direct, TFCOUP2-independent binding to a GC-rich response element. May also function in the P53-signaling pathway. The polypeptide is B-cell lymphoma/leukemia 11B (BCL11B) (Homo sapiens (Human)).